The chain runs to 330 residues: Ketol-acid reductoisomerase (NADP(+)) (330 aa).

The 181-residue stretch at 2–182 (ARMYYDADAN…GGTRAGILET (181 aa)) folds into the KARI N-terminal Rossmann domain. Residues 25–28 (YGSQ), serine 51, serine 53, and 83–86 (DEFQ) each bind NADP(+). Histidine 108 is a catalytic residue. Glycine 134 is an NADP(+) binding site. The region spanning 183-328 (SFREETETDL…KDLRAMFSWL (146 aa)) is the KARI C-terminal knotted domain. Mg(2+) is bound by residues aspartate 191, glutamate 195, glutamate 227, and glutamate 231. Serine 252 lines the substrate pocket.

Belongs to the ketol-acid reductoisomerase family. Requires Mg(2+) as cofactor.

The enzyme catalyses (2R)-2,3-dihydroxy-3-methylbutanoate + NADP(+) = (2S)-2-acetolactate + NADPH + H(+). It catalyses the reaction (2R,3R)-2,3-dihydroxy-3-methylpentanoate + NADP(+) = (S)-2-ethyl-2-hydroxy-3-oxobutanoate + NADPH + H(+). The protein operates within amino-acid biosynthesis; L-isoleucine biosynthesis; L-isoleucine from 2-oxobutanoate: step 2/4. Its pathway is amino-acid biosynthesis; L-valine biosynthesis; L-valine from pyruvate: step 2/4. Functionally, involved in the biosynthesis of branched-chain amino acids (BCAA). Catalyzes an alkyl-migration followed by a ketol-acid reduction of (S)-2-acetolactate (S2AL) to yield (R)-2,3-dihydroxy-isovalerate. In the isomerase reaction, S2AL is rearranged via a Mg-dependent methyl migration to produce 3-hydroxy-3-methyl-2-ketobutyrate (HMKB). In the reductase reaction, this 2-ketoacid undergoes a metal-dependent reduction by NADPH to yield (R)-2,3-dihydroxy-isovalerate. This chain is Ketol-acid reductoisomerase (NADP(+)), found in Synechococcus elongatus (strain ATCC 33912 / PCC 7942 / FACHB-805) (Anacystis nidulans R2).